The following is a 944-amino-acid chain: Ras guanine nucleotide exchange factor O (944 aa).

Residues 16-54 form an RING-type zinc finger; it reads CGICQNLFKDPNTLIPCGHAFCLDCLTTNASIKNCIQCK. The disordered stretch occupies residues 80-102; the sequence is NNSNNNSNGENTNNNNNIINNER. The B box-type zinc-finger motif lies at 152-192; sequence NNIRYCMEHYEHYYAFCNDCQAPVCPSCLLTTHNRHGMIPL. 4 residues coordinate Zn(2+): C157, H160, C179, and H184. 2 coiled-coil regions span residues 200–234 and 271–303; these read KMKEYRDIVQSFKTKMSQYKDNITLYQKEIELLDS and ASHMELTDRSSTLENEISEMEKLIGNGTDKFKD. Residues 402-528 form the N-terminal Ras-GEF domain; sequence EEFEVKYGSL…LLLNSNENSP (127 aa). 3 disordered regions span residues 530 to 562, 587 to 623, and 644 to 670; these read ITSSQSLSSQSLYSQTNNNNNNNNNNSNNLQPT, TNNGTCKIQNSPPKNYQQSNYSSIFNGPSSSSSSSPS, and ESPLNSPRNNNNNNNNNSPRSSSFGAS. The segment covering 590–604 has biased composition (polar residues); the sequence is GTCKIQNSPPKNYQQ. 2 stretches are compositionally biased toward low complexity: residues 605–623 and 648–670; these read SNYSSIFNGPSSSSSSSPS and NSPRNNNNNNNNNSPRSSSFGAS. The Ras-GEF domain maps to 727 to 944; that stretch reads DEFEIAKQLT…EYLNVHIDEL (218 aa).

In terms of biological role, promotes the exchange of Ras-bound GDP by GTP. The polypeptide is Ras guanine nucleotide exchange factor O (gefO) (Dictyostelium discoideum (Social amoeba)).